A 267-amino-acid polypeptide reads, in one-letter code: Levodione reductase (267 aa).

17-42 (LITGGGSGLGRATAVRLAAEGAKLSL) serves as a coordination point for NAD(+). A substrate-binding site is contributed by Ser-152. Catalysis depends on Tyr-165, which acts as the Proton acceptor.

This sequence belongs to the short-chain dehydrogenases/reductases (SDR) family.

The catalysed reaction is (4R)-hydroxy-(6R)-2,2,6-trimethylcyclohexanone + NAD(+) = (6R)-2,2,6-trimethyl-1,4-cyclohexanedione + NADH + H(+). Strongly activated by monovalent cations, such as K(+), Na(+), and NH4(+). Catalyzes the regio- and stereoselective reversible NAD-dependent reduction of (6R)-2,2,6-trimethyl-1,4-cyclohexanedione (levodione) to (4R,6R)-4-hydroxy-2,2,6-trimethylcyclohexanone (actinol). The protein is Levodione reductase (lvr) of Leifsonia aquatica (Corynebacterium aquaticum).